The chain runs to 197 residues: Segregation and condensation protein B (197 aa).

The protein belongs to the ScpB family. As to quaternary structure, homodimer. Homodimerization may be required to stabilize the binding of ScpA to the Smc head domains. Component of a cohesin-like complex composed of ScpA, ScpB and the Smc homodimer, in which ScpA and ScpB bind to the head domain of Smc. The presence of the three proteins is required for the association of the complex with DNA.

The protein resides in the cytoplasm. Participates in chromosomal partition during cell division. May act via the formation of a condensin-like complex containing Smc and ScpA that pull DNA away from mid-cell into both cell halves. The protein is Segregation and condensation protein B of Halalkalibacterium halodurans (strain ATCC BAA-125 / DSM 18197 / FERM 7344 / JCM 9153 / C-125) (Bacillus halodurans).